The chain runs to 274 residues: MSDNTSTATQSTPLLQDTFTVGSRTFSSRLLVGTGKYKDMTETGAAIGASAAEIVTVAIRRTNIGQNSNEPNLLDVISPDKYTILPNTAGCFDAETAIRTCKLARELLGGHNLVKLEVLGDEKTLYPNVMETLKAAKVLIDDGFEVMVYTSDDPIVAQELESMGCVAIMPLGSLIGSGLGLLNRHTLSLIIENAKVPVLVDAGVGTASDAAIAMELGCDGVLMNSAIANAQNPVMMAQAMKHAVWAGRQAFLAGRMPMRKMATASSPQTGYFFQ.

The active-site Schiff-base intermediate with DXP is Lys-115. 1-deoxy-D-xylulose 5-phosphate contacts are provided by residues Gly-176, Ala-202–Gly-203, and Asn-224–Ser-225.

Belongs to the ThiG family. Homotetramer. Forms heterodimers with either ThiH or ThiS.

The protein resides in the cytoplasm. It carries out the reaction [ThiS sulfur-carrier protein]-C-terminal-Gly-aminoethanethioate + 2-iminoacetate + 1-deoxy-D-xylulose 5-phosphate = [ThiS sulfur-carrier protein]-C-terminal Gly-Gly + 2-[(2R,5Z)-2-carboxy-4-methylthiazol-5(2H)-ylidene]ethyl phosphate + 2 H2O + H(+). The protein operates within cofactor biosynthesis; thiamine diphosphate biosynthesis. Functionally, catalyzes the rearrangement of 1-deoxy-D-xylulose 5-phosphate (DXP) to produce the thiazole phosphate moiety of thiamine. Sulfur is provided by the thiocarboxylate moiety of the carrier protein ThiS. In vitro, sulfur can be provided by H(2)S. This chain is Thiazole synthase, found in Psychrobacter cryohalolentis (strain ATCC BAA-1226 / DSM 17306 / VKM B-2378 / K5).